A 363-amino-acid polypeptide reads, in one-letter code: Small ribosomal subunit biogenesis GTPase RsgA (363 aa).

Residues 112-268 form the CP-type G domain; the sequence is HQQVIAANID…LIDTPGMREL (157 aa). Residues 157–160 and 210–218 contribute to the GTP site; these read TKAD and GSSGAGKST. Residues C291, C296, H298, and C304 each contribute to the Zn(2+) site. Residues 340 to 363 form a disordered region; it reads RVAQNNRGKGSGKRPASVDRPGRR.

The protein belongs to the TRAFAC class YlqF/YawG GTPase family. RsgA subfamily. In terms of assembly, monomer. Associates with 30S ribosomal subunit, binds 16S rRNA. Zn(2+) is required as a cofactor.

The protein localises to the cytoplasm. Functionally, one of several proteins that assist in the late maturation steps of the functional core of the 30S ribosomal subunit. Helps release RbfA from mature subunits. May play a role in the assembly of ribosomal proteins into the subunit. Circularly permuted GTPase that catalyzes slow GTP hydrolysis, GTPase activity is stimulated by the 30S ribosomal subunit. This chain is Small ribosomal subunit biogenesis GTPase RsgA, found in Xanthomonas campestris pv. campestris (strain 8004).